A 590-amino-acid polypeptide reads, in one-letter code: Negative elongation factor C/D (590 aa).

Residues 16 to 43 (GSAAEWGDEADGGQQEDDSGEGEDDAEV) form a disordered region. The segment covering 21-43 (WGDEADGGQQEDDSGEGEDDAEV) has biased composition (acidic residues).

Belongs to the NELF-D family. As to quaternary structure, the NELF complex is composed of NELFA, NELFB, NELFCD (isoform NELF-C or isoform NELF-D) and NELFE; NELFA and NELFCD form a stable subcomplex that binds primarily through NELFCD to the N-terminus of NELFB. Binds RNA which may help to stabilize the NELF complex on nucleic acid. In vitro, the NELFA:NELFCD subcomplex binds to ssDNA and ssRNA in a sequence- and structure-dependent manner. Interacts with ARAF. Interacts with PCF11. Interacts with KAT8. Widely expressed. Expressed in heart, brain, lung, placenta, liver, skeletal and cardiac muscle, adrenal, thyroid, kidney and pancreas.

The protein resides in the nucleus. In terms of biological role, essential component of the NELF complex, a complex that negatively regulates the elongation of transcription by RNA polymerase II. The NELF complex, which acts via an association with the DSIF complex and causes transcriptional pausing, is counteracted by the P-TEFb kinase complex. (Microbial infection) The NELF complex is involved in HIV-1 latency possibly involving recruitment of PCF11 to paused RNA polymerase II. The chain is Negative elongation factor C/D (NELFCD) from Homo sapiens (Human).